The chain runs to 206 residues: Large ribosomal subunit protein uL4 (206 aa).

The segment at 43–94 (ARSGNRAQKDREQVKHTTKKPWRQKGTGRARAGMSSSPLWRGGGRIFPNSPE) is disordered. Basic residues predominate over residues 58 to 70 (HTTKKPWRQKGTG).

This sequence belongs to the universal ribosomal protein uL4 family. As to quaternary structure, part of the 50S ribosomal subunit.

In terms of biological role, one of the primary rRNA binding proteins, this protein initially binds near the 5'-end of the 23S rRNA. It is important during the early stages of 50S assembly. It makes multiple contacts with different domains of the 23S rRNA in the assembled 50S subunit and ribosome. Forms part of the polypeptide exit tunnel. The polypeptide is Large ribosomal subunit protein uL4 (Polynucleobacter asymbioticus (strain DSM 18221 / CIP 109841 / QLW-P1DMWA-1) (Polynucleobacter necessarius subsp. asymbioticus)).